Here is a 264-residue protein sequence, read N- to C-terminus: Teichoic acids export ATP-binding protein TagH (264 aa).

The region spanning 5 to 243 (VNIKNVTKEY…YEAFLNDFKK (239 aa)) is the ABC transporter domain. ATP is bound at residue 57 to 64 (GINGSGKS).

The protein belongs to the ABC transporter superfamily. Teichoic acids exporter (TC 3.A.1.104.1) family. The complex is composed of two ATP-binding proteins (TagH) and two transmembrane proteins (TagG).

Its subcellular location is the cell membrane. It catalyses the reaction ATP + H2O + teichoic acidSide 1 = ADP + phosphate + teichoic acidSide 2.. In terms of biological role, part of the ABC transporter complex TagGH involved in teichoic acids export. Responsible for energy coupling to the transport system. The polypeptide is Teichoic acids export ATP-binding protein TagH (Staphylococcus aureus (strain USA300)).